We begin with the raw amino-acid sequence, 264 residues long: MAVGKNKRLTKGGKKGAKKKVVDPFSKKDWYDVKAPAMFNIRNIGKTLVTRTQGTKIASDGLKGHVFEVSLADLQNDEVAFRKFKLITEDVQGKNCLTNFHGMDLTRDKMCSMVKKWQTMIEAHVDVKTTDGYLLRLFCVGFTKKRNNQIRKTSYAQHQQVRQIRKKMMEIMTREVQTNDLKEVVNKLIPDSIGKDIEKACQSIYPLHDVFVRKVKMLKKPKFELGKLMELHGEGSSSGKATGDETGAKVERADGYEPPVQESV.

The residue at position 34 (K34) is an N6-acetyllysine; alternate. A Glycyl lysine isopeptide (Lys-Gly) (interchain with G-Cter in SUMO2); alternate cross-link involves residue K34. At K56 the chain carries N6-acetyllysine. An ADP-ribosyltyrosine modification is found at Y155. Positions 232 to 264 (HGEGSSSGKATGDETGAKVERADGYEPPVQESV) are disordered. 2 positions are modified to phosphoserine: S236 and S237. Over residues 242 to 255 (TGDETGAKVERADG) the composition is skewed to basic and acidic residues. K249 is subject to N6-acetyllysine; alternate. K249 participates in a covalent cross-link: Glycyl lysine isopeptide (Lys-Gly) (interchain with G-Cter in SUMO2); alternate. Position 256 is a phosphotyrosine (Y256). Phosphoserine is present on S263.

It belongs to the eukaryotic ribosomal protein eS1 family. As to quaternary structure, component of the small ribosomal subunit. Mature ribosomes consist of a small (40S) and a large (60S) subunit. The 40S subunit contains about 33 different proteins and 1 molecule of RNA (18S). The 60S subunit contains about 49 different proteins and 3 molecules of RNA (28S, 5.8S and 5S). Identified in a IGF2BP1-dependent mRNP granule complex containing untranslated mRNAs. Binds with high affinity to IPO4. Interacts with DDIT3. Part of the small subunit (SSU) processome, composed of more than 70 proteins and the RNA chaperone small nucleolar RNA (snoRNA) U3. ADP-ribosylated at Tyr-155 by PARP1 in presence of HPF1.

The protein resides in the cytoplasm. Its subcellular location is the nucleus. It is found in the nucleolus. Component of the small ribosomal subunit. The ribosome is a large ribonucleoprotein complex responsible for the synthesis of proteins in the cell. Part of the small subunit (SSU) processome, first precursor of the small eukaryotic ribosomal subunit. During the assembly of the SSU processome in the nucleolus, many ribosome biogenesis factors, an RNA chaperone and ribosomal proteins associate with the nascent pre-rRNA and work in concert to generate RNA folding, modifications, rearrangements and cleavage as well as targeted degradation of pre-ribosomal RNA by the RNA exosome. May play a role during erythropoiesis through regulation of transcription factor DDIT3. This chain is Small ribosomal subunit protein eS1, found in Macaca fascicularis (Crab-eating macaque).